Reading from the N-terminus, the 279-residue chain is Putative pyruvate, phosphate dikinase regulatory protein (279 aa).

Glycine 152–serine 159 lines the ADP pocket.

It belongs to the pyruvate, phosphate/water dikinase regulatory protein family. PDRP subfamily.

It catalyses the reaction N(tele)-phospho-L-histidyl/L-threonyl-[pyruvate, phosphate dikinase] + ADP = N(tele)-phospho-L-histidyl/O-phospho-L-threonyl-[pyruvate, phosphate dikinase] + AMP + H(+). It carries out the reaction N(tele)-phospho-L-histidyl/O-phospho-L-threonyl-[pyruvate, phosphate dikinase] + phosphate + H(+) = N(tele)-phospho-L-histidyl/L-threonyl-[pyruvate, phosphate dikinase] + diphosphate. Functionally, bifunctional serine/threonine kinase and phosphorylase involved in the regulation of the pyruvate, phosphate dikinase (PPDK) by catalyzing its phosphorylation/dephosphorylation. This Anaplasma marginale (strain St. Maries) protein is Putative pyruvate, phosphate dikinase regulatory protein.